Consider the following 292-residue polypeptide: 2-(5''-triphosphoribosyl)-3'-dephosphocoenzyme-A synthase (292 aa).

The protein belongs to the CitG/MdcB family.

The catalysed reaction is 3'-dephospho-CoA + ATP = 2'-(5''-triphospho-alpha-D-ribosyl)-3'-dephospho-CoA + adenine. Catalyzes the formation of 2-(5''-triphosphoribosyl)-3'-dephosphocoenzyme-A, the precursor of the prosthetic group of the holo-acyl carrier protein (gamma chain) of citrate lyase, from ATP and dephospho-CoA. The chain is 2-(5''-triphosphoribosyl)-3'-dephosphocoenzyme-A synthase from Escherichia coli (strain UTI89 / UPEC).